Reading from the N-terminus, the 154-residue chain is Nucleoside diphosphate kinase A2 (154 aa).

ATP is bound by residues Lys-13, Phe-61, Arg-89, Thr-95, Arg-106, and Asn-116. His-119 functions as the Pros-phosphohistidine intermediate in the catalytic mechanism.

Belongs to the NDK family. It depends on Mg(2+) as a cofactor.

The protein resides in the cytoplasm. It catalyses the reaction a 2'-deoxyribonucleoside 5'-diphosphate + ATP = a 2'-deoxyribonucleoside 5'-triphosphate + ADP. The catalysed reaction is a ribonucleoside 5'-diphosphate + ATP = a ribonucleoside 5'-triphosphate + ADP. Major role in the synthesis of nucleoside triphosphates other than ATP. The ATP gamma phosphate is transferred to the NDP beta phosphate via a ping-pong mechanism, using a phosphorylated active-site intermediate. The polypeptide is Nucleoside diphosphate kinase A2 (Xenopus laevis (African clawed frog)).